Reading from the N-terminus, the 110-residue chain is Cytochrome c6 (110 aa).

Positions 1-25 (MKKLVSSVILALILFGFSWVSPAFA) are cleaved as a signal peptide. Heme c is bound by residues C39, C42, H43, and M83.

It belongs to the cytochrome c family. PetJ subfamily. As to quaternary structure, monomer. Post-translationally, binds 1 heme c group covalently per subunit.

Its subcellular location is the cellular thylakoid lumen. Functionally, functions as an electron carrier between membrane-bound cytochrome b6-f and photosystem I in oxygenic photosynthesis. The chain is Cytochrome c6 from Gloeothece citriformis (strain PCC 7424) (Cyanothece sp. (strain PCC 7424)).